The sequence spans 265 residues: MPTWLASPDDPLPDTRHALPAGSEVPGLVAAGTDLSPRRLAEAYARGIFPWYSAGQPVLWWSPDPRMVLPVAEFKLSHSLRKTLRRFSAAPHCEVRIDHDFAAVIHACATTPREGQDGTWIQPELQAAYTEWHRLGAVHSFETWVDGRLLGGLYGVNLGRMFFGESMFSHATDASKIALAALVAFCRANDIALIDCQQRTAHLGSLGAREIDRPAFEGHLARTVAQRPPEDWTYHRSHWTQLRLDTGPDPASSSVTEISLRPAAP.

Positions Leu244–Pro265 are disordered.

This sequence belongs to the L/F-transferase family.

The protein resides in the cytoplasm. It carries out the reaction N-terminal L-lysyl-[protein] + L-leucyl-tRNA(Leu) = N-terminal L-leucyl-L-lysyl-[protein] + tRNA(Leu) + H(+). It catalyses the reaction N-terminal L-arginyl-[protein] + L-leucyl-tRNA(Leu) = N-terminal L-leucyl-L-arginyl-[protein] + tRNA(Leu) + H(+). The enzyme catalyses L-phenylalanyl-tRNA(Phe) + an N-terminal L-alpha-aminoacyl-[protein] = an N-terminal L-phenylalanyl-L-alpha-aminoacyl-[protein] + tRNA(Phe). Its function is as follows. Functions in the N-end rule pathway of protein degradation where it conjugates Leu, Phe and, less efficiently, Met from aminoacyl-tRNAs to the N-termini of proteins containing an N-terminal arginine or lysine. The polypeptide is Leucyl/phenylalanyl-tRNA--protein transferase (Methylibium petroleiphilum (strain ATCC BAA-1232 / LMG 22953 / PM1)).